The sequence spans 1366 residues: Collagen alpha-2(I) chain (1366 aa).

The first 22 residues, 1–22 (MLSFVDTRTLLLLAVTLCLATC), serve as a signal peptide directing secretion. A Pyrrolidone carboxylic acid modification is found at Gln-23. Residues 23 to 79 (QSLQEETVRKGPAGDRGPRGERGPPGPPGRDGEDGPTGPPGPPGPPGPPGLGGNFAA) constitute a propeptide, N-terminal propeptide. The segment covering 28-44 (ETVRKGPAGDRGPRGER) has biased composition (basic and acidic residues). The disordered stretch occupies residues 28 to 1130 (ETVRKGPAGD…QPRSAPSLRP (1103 aa)). 4-hydroxyproline is present on residues Pro-47, Pro-50, Pro-62, Pro-65, Pro-68, and Pro-71. The span at 59–71 (TGPPGPPGPPGPP) shows a compositional bias: pro residues. The residue at position 80 (Gln-80) is a Pyrrolidone carboxylic acid. The residue at position 84 (Lys-84) is an Allysine. The segment covering 84–94 (KGVGLGPGPMG) has biased composition (gly residues). Over residues 95 to 140 (LMGPRGPPGAAGAPGPQGFQGPAGEPGEPGQTGPAGARGPAGPPGK) the composition is skewed to low complexity. Residues Pro-102 and Pro-108 each carry the 4-hydroxyproline modification. The segment covering 141 to 155 (AGEDGHPGKPGRPGE) has biased composition (basic and acidic residues). Lys-177 is modified (5-hydroxylysine; alternate). Lys-177 carries O-linked (Gal...) hydroxylysine; alternate glycosylation. 6 stretches are compositionally biased toward low complexity: residues 225 to 254 (VGAP…SAGP), 269 to 293 (AVGN…LSGP), 300 to 321 (PGAN…AGAP), 330 to 345 (PGPV…RGLV), 398 to 410 (LRGS…LPGA), and 419 to 434 (PPGS…VRGP). A 4-hydroxyproline mark is found at Pro-420, Pro-441, and Pro-444. Composition is skewed to low complexity over residues 470-489 (LPGI…RGEP) and 513-531 (AGLA…NGAQ). Positions 538 to 547 (GVQGGKGEQG) are enriched in gly residues. 4 stretches are compositionally biased toward low complexity: residues 594 to 611 (PGES…SRGP), 623 to 648 (EPGV…RGAA), 663 to 710 (RGEI…PRGS), and 717 to 737 (VGPA…QPGA). The segment covering 738–747 (KGERGAKGPK) has biased composition (basic and acidic residues). Over residues 752–765 (VVGPTGPVGAAGPA) the composition is skewed to low complexity. A compositionally biased stretch (gly residues) spans 775 to 784 (GSRGDGGPPG). 5 stretches are compositionally biased toward low complexity: residues 786–795 (TGFPGAAGRT), 849–876 (SGEA…LGLP), 884–932 (LPGV…NPGN), 956–974 (PVGA…PAGK), and 983–1001 (PSGP…PSGP). Residues 1005–1016 (RGDKGEPGEKGP) show a composition bias toward basic and acidic residues. Residues 1089 to 1101 (AGPPGPPGPPGPP) are compositionally biased toward pro residues. Positions 1120-1366 (DQPRSAPSLR…FVDIGPVCFK (247 aa)) are cleaved as a propeptide — C-terminal propeptide. The Fibrillar collagen NC1 domain occupies 1133–1366 (YEVDATLKSL…FVDIGPVCFK (234 aa)). Cystine bridges form between Cys-1163–Cys-1195, Cys-1203–Cys-1364, and Cys-1272–Cys-1317. Residues Asp-1181, Asn-1183, Gln-1184, Cys-1186, and Asp-1189 each contribute to the Ca(2+) site. Asn-1267 carries an N-linked (GlcNAc...) asparagine glycan.

It belongs to the fibrillar collagen family. Trimers of one alpha 2(I) and two alpha 1(I) chains. Interacts (via C-terminus) with TMEM131 (via PapD-L domain); the interaction is direct and is involved in assembly and TRAPPIII ER-to-Golgi transport complex-dependent secretion of collagen. In terms of processing, prolines at the third position of the tripeptide repeating unit (G-X-Y) are hydroxylated in some or all of the chains. As to expression, forms the fibrils of tendon, ligaments and bones. In bones the fibrils are mineralized with calcium hydroxyapatite.

It is found in the secreted. Its subcellular location is the extracellular space. The protein localises to the extracellular matrix. Functionally, type I collagen is a member of group I collagen (fibrillar forming collagen). The protein is Collagen alpha-2(I) chain (COL1A2) of Homo sapiens (Human).